Reading from the N-terminus, the 221-residue chain is UPF0758 protein HI_0952 (221 aa).

The region spanning 99-221 is the MPN domain; that stretch reads IINDPETVKL…CYSFAENCLL (123 aa). His170, His172, and Asp183 together coordinate Zn(2+). A JAMM motif motif is present at residues 170–183; the sequence is HNHPSGITEPSYSD.

The protein belongs to the UPF0758 family.

In Haemophilus influenzae (strain ATCC 51907 / DSM 11121 / KW20 / Rd), this protein is UPF0758 protein HI_0952.